Here is a 364-residue protein sequence, read N- to C-terminus: Phosphoserine aminotransferase (364 aa).

Residue Arg41 participates in L-glutamate binding. Pyridoxal 5'-phosphate-binding positions include 75 to 76 (AS), Trp100, Thr155, Asp175, and Gln198. The residue at position 199 (Lys199) is an N6-(pyridoxal phosphate)lysine. 239–240 (NT) contacts pyridoxal 5'-phosphate.

It belongs to the class-V pyridoxal-phosphate-dependent aminotransferase family. SerC subfamily. As to quaternary structure, homodimer. Pyridoxal 5'-phosphate serves as cofactor.

It is found in the cytoplasm. The enzyme catalyses O-phospho-L-serine + 2-oxoglutarate = 3-phosphooxypyruvate + L-glutamate. The catalysed reaction is 4-(phosphooxy)-L-threonine + 2-oxoglutarate = (R)-3-hydroxy-2-oxo-4-phosphooxybutanoate + L-glutamate. It functions in the pathway amino-acid biosynthesis; L-serine biosynthesis; L-serine from 3-phospho-D-glycerate: step 2/3. Its function is as follows. Catalyzes the reversible conversion of 3-phosphohydroxypyruvate to phosphoserine and of 3-hydroxy-2-oxo-4-phosphonooxybutanoate to phosphohydroxythreonine. In Streptococcus thermophilus (strain CNRZ 1066), this protein is Phosphoserine aminotransferase.